The chain runs to 157 residues: Crossover junction endodeoxyribonuclease RuvC (157 aa).

Residues Asp7, Glu67, and Asp139 contribute to the active site. Residues Asp7, Glu67, and Asp139 each contribute to the Mg(2+) site.

This sequence belongs to the RuvC family. Homodimer which binds Holliday junction (HJ) DNA. The HJ becomes 2-fold symmetrical on binding to RuvC with unstacked arms; it has a different conformation from HJ DNA in complex with RuvA. In the full resolvosome a probable DNA-RuvA(4)-RuvB(12)-RuvC(2) complex forms which resolves the HJ. The cofactor is Mg(2+).

The protein resides in the cytoplasm. The enzyme catalyses Endonucleolytic cleavage at a junction such as a reciprocal single-stranded crossover between two homologous DNA duplexes (Holliday junction).. Functionally, the RuvA-RuvB-RuvC complex processes Holliday junction (HJ) DNA during genetic recombination and DNA repair. Endonuclease that resolves HJ intermediates. Cleaves cruciform DNA by making single-stranded nicks across the HJ at symmetrical positions within the homologous arms, yielding a 5'-phosphate and a 3'-hydroxyl group; requires a central core of homology in the junction. The consensus cleavage sequence is 5'-(A/T)TT(C/G)-3'. Cleavage occurs on the 3'-side of the TT dinucleotide at the point of strand exchange. HJ branch migration catalyzed by RuvA-RuvB allows RuvC to scan DNA until it finds its consensus sequence, where it cleaves and resolves the cruciform DNA. The polypeptide is Crossover junction endodeoxyribonuclease RuvC (Prochlorococcus marinus (strain AS9601)).